We begin with the raw amino-acid sequence, 251 residues long: MRSGVIVKKVGMTRLFMEDGRHVPVTVLKLDNCQVVSQRTDEKNGYTAVQLGTGRAKAKNVANAQRGQFARASVEPKLELVEFRVSPDNLLDVGVEITADHFIAGQYVDVSGTSIGKGFAGVMKRHNFGGLRATHGVSVSHRSHGSTGQNQDPGKVFKGKKMAGHMGATRVTTQNLEVVRTDADKGLIMVKGAVPGSKGGWVLVRDAVKTKLPEGVPVPGAFRRNGEEAAAAPAAEAPAETPAEEAGQEGA.

At glutamine 151 the chain carries N5-methylglutamine. A disordered region spans residues 219–251; sequence PGAFRRNGEEAAAAPAAEAPAETPAEEAGQEGA. A compositionally biased stretch (low complexity) spans 228 to 241; sequence EAAAAPAAEAPAET. Over residues 242 to 251 the composition is skewed to acidic residues; it reads PAEEAGQEGA.

It belongs to the universal ribosomal protein uL3 family. Part of the 50S ribosomal subunit. Forms a cluster with proteins L14 and L19. In terms of processing, methylated by PrmB.

Its function is as follows. One of the primary rRNA binding proteins, it binds directly near the 3'-end of the 23S rRNA, where it nucleates assembly of the 50S subunit. In Parvibaculum lavamentivorans (strain DS-1 / DSM 13023 / NCIMB 13966), this protein is Large ribosomal subunit protein uL3.